Reading from the N-terminus, the 143-residue chain is Large ribosomal subunit protein uL11 (143 aa).

It belongs to the universal ribosomal protein uL11 family. As to quaternary structure, part of the ribosomal stalk of the 50S ribosomal subunit. Interacts with L10 and the large rRNA to form the base of the stalk. L10 forms an elongated spine to which L12 dimers bind in a sequential fashion forming a multimeric L10(L12)X complex. Post-translationally, one or more lysine residues are methylated.

Forms part of the ribosomal stalk which helps the ribosome interact with GTP-bound translation factors. This Burkholderia multivorans (strain ATCC 17616 / 249) protein is Large ribosomal subunit protein uL11.